Consider the following 437-residue polypeptide: RNA-binding motif, single-stranded-interacting protein 3 (437 aa).

The segment at 28-57 is disordered; sequence YAPAPHPMAPPSPSTNSSSNNSSNNSSGEQ. Residues 31 to 40 are compositionally biased toward pro residues; that stretch reads APHPMAPPSP. The span at 41-54 shows a compositional bias: low complexity; the sequence is STNSSSNNSSNNSS. RRM domains follow at residues 61 to 134 and 140 to 225; these read TNLY…MAKQ and TNLY…FADG. Polar residues predominate over residues 399-422; it reads TSPQTVAPSSQDTSGQQQQIAVDT. The disordered stretch occupies residues 399 to 437; it reads TSPQTVAPSSQDTSGQQQQIAVDTSNEHAPAYSYQQSKP.

In terms of tissue distribution, expressed in fetal brain, fetal lung, fetal liver, heart, brain, placenta, lung, liver, muscle, kidney and pancreas.

The protein resides in the cytoplasm. In terms of biological role, binds poly(A) and poly(U) oligoribonucleotides. This is RNA-binding motif, single-stranded-interacting protein 3 (RBMS3) from Homo sapiens (Human).